The sequence spans 390 residues: Protein shisa-9 (390 aa).

Positions Met1–Ala22 are cleaved as a signal peptide. The Extracellular portion of the chain corresponds to Gln23–Lys134. N-linked (GlcNAc...) asparagine glycans are attached at residues Asn40 and Asn74. Residues Thr135–Phe155 form a helical membrane-spanning segment. Topologically, residues Thr156–Val390 are cytoplasmic.

The protein belongs to the shisa family. SHISA9 subfamily. Component of some AMPA receptors (ionotropic glutamate receptors) complex.

The protein resides in the cell projection. Its subcellular location is the dendritic spine membrane. The protein localises to the synapse. Functionally, regulator of short-term neuronal synaptic plasticity in the dentate gyrus. Associates with AMPA receptors (ionotropic glutamate receptors) in synaptic spines and promotes AMPA receptor desensitization at excitatory synapses. The sequence is that of Protein shisa-9 (shisa9) from Xenopus tropicalis (Western clawed frog).